The chain runs to 227 residues: MAYPLQLGLQDATSPIMEELMNFHDHTLMIVFLISSLVLYVISSMLTTKLTHTSTMDAQEVETIWTILPAVILIMIALPSLRILYMMDEINNPVLTVKTMGHQWYWSYEYTDYEDLCFDSYMIPTTDLKPGEFRLLEVDNRVILPMELPIRMLISSEDVLHSWAIPSLGLKTDAIPGRLNQATISSNRPGLFYGQCSEICGSNHSFMPIILEMVPLKNFETWSVSMI.

Residues 1–14 (MAYPLQLGLQDATS) lie on the Mitochondrial intermembrane side of the membrane. A helical membrane pass occupies residues 15 to 45 (PIMEELMNFHDHTLMIVFLISSLVLYVISSM). Residues 46 to 59 (LTTKLTHTSTMDAQ) lie on the Mitochondrial matrix side of the membrane. The chain crosses the membrane as a helical span at residues 60–87 (EVETIWTILPAVILIMIALPSLRILYMM). Over 88–227 (DEINNPVLTV…NFETWSVSMI (140 aa)) the chain is Mitochondrial intermembrane. Residues His-161, Cys-196, Glu-198, Cys-200, His-204, and Met-207 each contribute to the Cu cation site. Glu-198 is a Mg(2+) binding site.

It belongs to the cytochrome c oxidase subunit 2 family. In terms of assembly, component of the cytochrome c oxidase (complex IV, CIV), a multisubunit enzyme composed of 14 subunits. The complex is composed of a catalytic core of 3 subunits MT-CO1, MT-CO2 and MT-CO3, encoded in the mitochondrial DNA, and 11 supernumerary subunits COX4I, COX5A, COX5B, COX6A, COX6B, COX6C, COX7A, COX7B, COX7C, COX8 and NDUFA4, which are encoded in the nuclear genome. The complex exists as a monomer or a dimer and forms supercomplexes (SCs) in the inner mitochondrial membrane with NADH-ubiquinone oxidoreductase (complex I, CI) and ubiquinol-cytochrome c oxidoreductase (cytochrome b-c1 complex, complex III, CIII), resulting in different assemblies (supercomplex SCI(1)III(2)IV(1) and megacomplex MCI(2)III(2)IV(2)). Found in a complex with TMEM177, COA6, COX18, COX20, SCO1 and SCO2. Interacts with TMEM177 in a COX20-dependent manner. Interacts with COX20. Interacts with COX16. Requires Cu cation as cofactor.

Its subcellular location is the mitochondrion inner membrane. It catalyses the reaction 4 Fe(II)-[cytochrome c] + O2 + 8 H(+)(in) = 4 Fe(III)-[cytochrome c] + 2 H2O + 4 H(+)(out). Component of the cytochrome c oxidase, the last enzyme in the mitochondrial electron transport chain which drives oxidative phosphorylation. The respiratory chain contains 3 multisubunit complexes succinate dehydrogenase (complex II, CII), ubiquinol-cytochrome c oxidoreductase (cytochrome b-c1 complex, complex III, CIII) and cytochrome c oxidase (complex IV, CIV), that cooperate to transfer electrons derived from NADH and succinate to molecular oxygen, creating an electrochemical gradient over the inner membrane that drives transmembrane transport and the ATP synthase. Cytochrome c oxidase is the component of the respiratory chain that catalyzes the reduction of oxygen to water. Electrons originating from reduced cytochrome c in the intermembrane space (IMS) are transferred via the dinuclear copper A center (CU(A)) of subunit 2 and heme A of subunit 1 to the active site in subunit 1, a binuclear center (BNC) formed by heme A3 and copper B (CU(B)). The BNC reduces molecular oxygen to 2 water molecules using 4 electrons from cytochrome c in the IMS and 4 protons from the mitochondrial matrix. The chain is Cytochrome c oxidase subunit 2 (MT-CO2) from Malacothrix typica (Long-eared mouse).